Consider the following 82-residue polypeptide: Large ribosomal subunit protein bL27 (82 aa).

The segment at 1–54 (MAHKKGQGASRNGRDSESKRLGMKVGAGQRVSTGSILVRQRGTKWHPSQNVGRG) is disordered.

It belongs to the bacterial ribosomal protein bL27 family.

The chain is Large ribosomal subunit protein bL27 from Chlamydia caviae (strain ATCC VR-813 / DSM 19441 / 03DC25 / GPIC) (Chlamydophila caviae).